A 173-amino-acid polypeptide reads, in one-letter code: Peptide deformylase (173 aa).

Cys94 and His136 together coordinate Fe cation. Glu137 is a catalytic residue. A Fe cation-binding site is contributed by His140.

This sequence belongs to the polypeptide deformylase family. It depends on Fe(2+) as a cofactor.

It catalyses the reaction N-terminal N-formyl-L-methionyl-[peptide] + H2O = N-terminal L-methionyl-[peptide] + formate. Its function is as follows. Removes the formyl group from the N-terminal Met of newly synthesized proteins. Requires at least a dipeptide for an efficient rate of reaction. N-terminal L-methionine is a prerequisite for activity but the enzyme has broad specificity at other positions. This chain is Peptide deformylase, found in Desulfosudis oleivorans (strain DSM 6200 / JCM 39069 / Hxd3) (Desulfococcus oleovorans).